The sequence spans 58 residues: Large ribosomal subunit protein eL24 (58 aa).

Residues Cys-6, Cys-9, Cys-32, and Cys-36 each coordinate Zn(2+). The segment at 6–36 adopts a C4-type zinc-finger fold; sequence CSFCGAEIPPGYGIMYVRNDGTIQRYCSRKC.

This sequence belongs to the eukaryotic ribosomal protein eL24 family. Part of the 50S ribosomal subunit. Forms a cluster with proteins L3 and L14. It depends on Zn(2+) as a cofactor.

In terms of biological role, binds to the 23S rRNA. This is Large ribosomal subunit protein eL24 from Pyrobaculum neutrophilum (strain DSM 2338 / JCM 9278 / NBRC 100436 / V24Sta) (Thermoproteus neutrophilus).